Reading from the N-terminus, the 344-residue chain is Uroporphyrinogen decarboxylase (344 aa).

Residues 26-30 (RQAGR), Phe-45, Asp-75, Tyr-151, Ser-206, and His-320 contribute to the substrate site.

It belongs to the uroporphyrinogen decarboxylase family. As to quaternary structure, homodimer.

The protein localises to the cytoplasm. It carries out the reaction uroporphyrinogen III + 4 H(+) = coproporphyrinogen III + 4 CO2. The protein operates within porphyrin-containing compound metabolism; protoporphyrin-IX biosynthesis; coproporphyrinogen-III from 5-aminolevulinate: step 4/4. Functionally, catalyzes the decarboxylation of four acetate groups of uroporphyrinogen-III to yield coproporphyrinogen-III. In Staphylococcus saprophyticus subsp. saprophyticus (strain ATCC 15305 / DSM 20229 / NCIMB 8711 / NCTC 7292 / S-41), this protein is Uroporphyrinogen decarboxylase.